The sequence spans 273 residues: Ribosomal RNA small subunit methyltransferase I (273 aa).

It belongs to the methyltransferase superfamily. RsmI family.

It is found in the cytoplasm. It catalyses the reaction cytidine(1402) in 16S rRNA + S-adenosyl-L-methionine = 2'-O-methylcytidine(1402) in 16S rRNA + S-adenosyl-L-homocysteine + H(+). Functionally, catalyzes the 2'-O-methylation of the ribose of cytidine 1402 (C1402) in 16S rRNA. The sequence is that of Ribosomal RNA small subunit methyltransferase I from Xylella fastidiosa (strain Temecula1 / ATCC 700964).